The sequence spans 620 residues: MSPEALSELISSIAHNLVAAGQAGALTDELIPPVDKLAVMRPKDRAHGDWASNIAMQLAKKAGMKPRDLAEPFAAALAEADGIAKVEVAGPGFINITLDSASAAAVVDAVLAAGAVTDADKHLNKVNEYGRNDHLGGQTLNLEFVSANPTGPIHIGGTRWAAVGDAMARVLEANGAKVVREYYFNDHGEQINRFAKSLVAAWAEANNLGEAGYQTETPCDGYKGAYINEIAARVQAEAESDGVDLTALAHQDQGLNDDGEPLGEADTEVREEFRKRAVPMMFDEIQKSMKDFRVNFDVWFHENSLYADGKVDAAIEELKSRGDIFDKDGATWFESTKHGDDKDRVIIKSNGEFAYFAADIAYYWDKRHRAENSADVAIYMLGADHHGYIGRMMAMCAAFGDEPGKNMQILIGQLVNVMKDGKPVRMSKRAGNVVTIDDLVSVVGVDAARYSLARSDYNQNFDIDLALLASHTNDNPVYYVQYAHARSKNVDRNAAAAGISYEGADLALLDTEADGEVLAALAQFPSVLATAADDRQPHKVARYLEELAATYHKWYNVERVVPMALTDPETRGDDEARKALEIAKNPEPARAAARLKLNDAVQQVIANGLDLLGVTAPEKM.

The 'HIGH' region signature appears at 147–157 (ANPTGPIHIGG).

This sequence belongs to the class-I aminoacyl-tRNA synthetase family. In terms of assembly, monomer.

It localises to the cytoplasm. It catalyses the reaction tRNA(Arg) + L-arginine + ATP = L-arginyl-tRNA(Arg) + AMP + diphosphate. The polypeptide is Arginine--tRNA ligase (Bifidobacterium longum (strain NCC 2705)).